Here is a 155-residue protein sequence, read N- to C-terminus: Small ribosomal subunit protein uS7c (155 aa).

The protein belongs to the universal ribosomal protein uS7 family. As to quaternary structure, part of the 30S ribosomal subunit.

It localises to the plastid. It is found in the chloroplast. Functionally, one of the primary rRNA binding proteins, it binds directly to 16S rRNA where it nucleates assembly of the head domain of the 30S subunit. In Butomus umbellatus (Flowering rush), this protein is Small ribosomal subunit protein uS7c (rps7).